A 70-amino-acid polypeptide reads, in one-letter code: Brevinin-1S (70 aa).

A signal peptide spans 1 to 22 (MFTLKKSLLLLFFLGTINLSLC). The propeptide occupies 23–44 (EEERNAEEERRDDPEERDVEVE). Cysteines 64 and 70 form a disulfide.

Belongs to the frog skin active peptide (FSAP) family. Brevinin subfamily. Expressed by the skin glands.

Its subcellular location is the secreted. In terms of biological role, antimicrobial peptide. The polypeptide is Brevinin-1S (Odorrana schmackeri (Schmacker's frog)).